The following is an 875-amino-acid chain: Alanine--tRNA ligase (875 aa).

Residues His-567, His-571, Cys-669, and His-673 each contribute to the Zn(2+) site.

It belongs to the class-II aminoacyl-tRNA synthetase family. Zn(2+) is required as a cofactor.

The protein resides in the cytoplasm. It carries out the reaction tRNA(Ala) + L-alanine + ATP = L-alanyl-tRNA(Ala) + AMP + diphosphate. Catalyzes the attachment of alanine to tRNA(Ala) in a two-step reaction: alanine is first activated by ATP to form Ala-AMP and then transferred to the acceptor end of tRNA(Ala). Also edits incorrectly charged Ser-tRNA(Ala) and Gly-tRNA(Ala) via its editing domain. In Geobacter sulfurreducens (strain ATCC 51573 / DSM 12127 / PCA), this protein is Alanine--tRNA ligase.